The primary structure comprises 311 residues: L-lactate dehydrogenase 2 (311 aa).

NAD(+) is bound by residues valine 14, aspartate 35, and arginine 40. Arginine 90 is a substrate binding site. NAD(+)-binding positions include serine 103, 120-122 (ATN), and threonine 145. 122 to 125 (NPCD) is a substrate binding site. 150-153 (DTTR) lines the substrate pocket. The active-site Proton acceptor is the histidine 177. Threonine 230 serves as a coordination point for substrate.

Belongs to the LDH/MDH superfamily. LDH family. As to quaternary structure, homotetramer.

The protein localises to the cytoplasm. The enzyme catalyses (S)-lactate + NAD(+) = pyruvate + NADH + H(+). It functions in the pathway fermentation; pyruvate fermentation to lactate; (S)-lactate from pyruvate: step 1/1. Catalyzes the conversion of lactate to pyruvate. The polypeptide is L-lactate dehydrogenase 2 (Listeria monocytogenes serotype 4b (strain F2365)).